Consider the following 194-residue polypeptide: Erythropoietin (194 aa).

The first 26 residues, 1 to 26 (MGARECPARLLLLSLLLLPLGLPVLG), serve as a signal peptide directing secretion. Disulfide bonds link cysteine 33-cysteine 189 and cysteine 55-cysteine 59. Asparagine 50 is a glycosylation site (N-linked (GlcNAc...) asparagine). N-linked (GlcNAc...) asparagine glycans are attached at residues asparagine 64, asparagine 109, and asparagine 172.

Belongs to the EPO/TPO family. As to expression, produced by kidney or liver of adult mammals and by liver of fetal or neonatal mammals.

The protein resides in the secreted. Functionally, hormone involved in the regulation of erythrocyte proliferation and differentiation and the maintenance of a physiological level of circulating erythrocyte mass. Binds to EPOR leading to EPOR dimerization and JAK2 activation thereby activating specific downstream effectors, including STAT1 and STAT3. The protein is Erythropoietin (EPO) of Sus scrofa (Pig).